Reading from the N-terminus, the 228-residue chain is Urease accessory protein UreF (228 aa).

The protein belongs to the UreF family. As to quaternary structure, ureD, UreF and UreG form a complex that acts as a GTP-hydrolysis-dependent molecular chaperone, activating the urease apoprotein by helping to assemble the nickel containing metallocenter of UreC. The UreE protein probably delivers the nickel.

It is found in the cytoplasm. In terms of biological role, required for maturation of urease via the functional incorporation of the urease nickel metallocenter. In Prochlorococcus marinus subsp. pastoris (strain CCMP1986 / NIES-2087 / MED4), this protein is Urease accessory protein UreF.